We begin with the raw amino-acid sequence, 296 residues long: Probable AP endonuclease (296 aa).

A disulfide bridge connects residues Cys-16 and Cys-20. 8 residues coordinate Zn(2+): His-78, His-115, Glu-142, His-182, His-218, Asp-231, His-233, and Glu-271.

This sequence belongs to the AP endonuclease 2 family. Zn(2+) is required as a cofactor.

The protein resides in the host nucleus. It localises to the host cytoplasm. The protein localises to the virion. In terms of biological role, endonuclease of the viral base excision repair system that catalyzes DNA cleavage reaction at the apurinic or apyrimidinic sites (AP sites). Cleaves phosphodiester bonds on the 5' side of AP sites. In addition to endonuclease activity, the AP endonuclease has a proofreading 3'-5' exonuclease activity that is considerably more efficient in the elimination of a mismatch than in that of a correctly paired base. Displays 3'-phosphatase and 3'-repair diesterase activities. The single nucleotide gaps generated by the AP endonuclease are filled by the viral repair DNA polymerase X and the DNA ligase. This chain is Probable AP endonuclease, found in Ornithodoros (relapsing fever ticks).